The primary structure comprises 271 residues: Orotidine 5'-phosphate decarboxylase (271 aa).

K97 acts as the Proton donor in catalysis.

It belongs to the OMP decarboxylase family. Type 2 subfamily.

The catalysed reaction is orotidine 5'-phosphate + H(+) = UMP + CO2. Its pathway is pyrimidine metabolism; UMP biosynthesis via de novo pathway; UMP from orotate: step 2/2. This Leptospira borgpetersenii serovar Hardjo-bovis (strain JB197) protein is Orotidine 5'-phosphate decarboxylase.